The primary structure comprises 49 residues: Large ribosomal subunit protein bL33B (49 aa).

The protein belongs to the bacterial ribosomal protein bL33 family.

This is Large ribosomal subunit protein bL33B from Levilactobacillus brevis (strain ATCC 367 / BCRC 12310 / CIP 105137 / JCM 1170 / LMG 11437 / NCIMB 947 / NCTC 947) (Lactobacillus brevis).